Reading from the N-terminus, the 554-residue chain is Glucose-6-phosphate isomerase (554 aa).

The active-site Proton donor is the Glu359. Residues His390 and Lys518 contribute to the active site.

The protein belongs to the GPI family.

It localises to the cytoplasm. It catalyses the reaction alpha-D-glucose 6-phosphate = beta-D-fructose 6-phosphate. It functions in the pathway carbohydrate biosynthesis; gluconeogenesis. The protein operates within carbohydrate degradation; glycolysis; D-glyceraldehyde 3-phosphate and glycerone phosphate from D-glucose: step 2/4. Its function is as follows. Catalyzes the reversible isomerization of glucose-6-phosphate to fructose-6-phosphate. The polypeptide is Glucose-6-phosphate isomerase (Pseudomonas putida (strain W619)).